Here is a 303-residue protein sequence, read N- to C-terminus: Aspartate carbamoyltransferase catalytic subunit (303 aa).

Carbamoyl phosphate-binding residues include arginine 51 and threonine 52. Position 80 (lysine 80) interacts with L-aspartate. The carbamoyl phosphate site is built by arginine 101, histidine 129, and glutamine 132. The L-aspartate site is built by arginine 162 and arginine 221. Leucine 260 and proline 261 together coordinate carbamoyl phosphate.

The protein belongs to the aspartate/ornithine carbamoyltransferase superfamily. ATCase family. Heterooligomer of catalytic and regulatory chains.

It catalyses the reaction carbamoyl phosphate + L-aspartate = N-carbamoyl-L-aspartate + phosphate + H(+). It participates in pyrimidine metabolism; UMP biosynthesis via de novo pathway; (S)-dihydroorotate from bicarbonate: step 2/3. Its function is as follows. Catalyzes the condensation of carbamoyl phosphate and aspartate to form carbamoyl aspartate and inorganic phosphate, the committed step in the de novo pyrimidine nucleotide biosynthesis pathway. The protein is Aspartate carbamoyltransferase catalytic subunit of Saccharolobus solfataricus (strain ATCC 35092 / DSM 1617 / JCM 11322 / P2) (Sulfolobus solfataricus).